We begin with the raw amino-acid sequence, 178 residues long: Ribosome maturation factor RimM (178 aa).

A PRC barrel domain is found at 101 to 178; it reads DGEYYWYQLQ…EMKVEWDADF (78 aa).

Belongs to the RimM family. As to quaternary structure, binds ribosomal protein uS19.

It is found in the cytoplasm. Functionally, an accessory protein needed during the final step in the assembly of 30S ribosomal subunit, possibly for assembly of the head region. Essential for efficient processing of 16S rRNA. May be needed both before and after RbfA during the maturation of 16S rRNA. It has affinity for free ribosomal 30S subunits but not for 70S ribosomes. This chain is Ribosome maturation factor RimM, found in Pseudomonas fluorescens (strain ATCC BAA-477 / NRRL B-23932 / Pf-5).